The following is a 103-amino-acid chain: Large ribosomal subunit protein uL24 (103 aa).

This sequence belongs to the universal ribosomal protein uL24 family. As to quaternary structure, part of the 50S ribosomal subunit.

One of two assembly initiator proteins, it binds directly to the 5'-end of the 23S rRNA, where it nucleates assembly of the 50S subunit. Its function is as follows. One of the proteins that surrounds the polypeptide exit tunnel on the outside of the subunit. In Latilactobacillus sakei subsp. sakei (strain 23K) (Lactobacillus sakei subsp. sakei), this protein is Large ribosomal subunit protein uL24.